Here is a 268-residue protein sequence, read N- to C-terminus: WUSCHEL-related homeobox 12 (268 aa).

Residues 1-16 are compositionally biased toward polar residues; it reads MNQEGASHSPSSTSTE. 2 disordered regions span residues 1–22 and 173–198; these read MNQE…RARW and SDHN…QNSN. The segment at residues 17 to 81 is a DNA-binding region (homeobox; WUS-type); the sequence is PVRARWSPKP…NRRSRSRRRH (65 aa).

This sequence belongs to the WUS homeobox family.

The protein localises to the nucleus. In terms of biological role, transcription factor which may be involved in developmental processes. In Arabidopsis thaliana (Mouse-ear cress), this protein is WUSCHEL-related homeobox 12 (WOX12).